A 321-amino-acid chain; its full sequence is Phosphatidate cytidylyltransferase, mitochondrial (321 aa).

The protein belongs to the TAM41 family. It depends on Mg(2+) as a cofactor. Requires Co(2+) as cofactor. Cu(2+) serves as cofactor.

It is found in the mitochondrion inner membrane. It carries out the reaction a 1,2-diacyl-sn-glycero-3-phosphate + CTP + H(+) = a CDP-1,2-diacyl-sn-glycerol + diphosphate. The protein operates within phospholipid metabolism; CDP-diacylglycerol biosynthesis; CDP-diacylglycerol from sn-glycerol 3-phosphate: step 3/3. Its function is as follows. Catalyzes the formation of CDP-diacylglycerol (CDP-DAG) from phosphatidic acid (PA) in the mitochondrial inner membrane. Required for the biosynthesis of the dimeric phospholipid cardiolipin, which stabilizes supercomplexes of the mitochondrial respiratory chain in the mitochondrial inner membrane. This Caenorhabditis briggsae protein is Phosphatidate cytidylyltransferase, mitochondrial.